Consider the following 67-residue polypeptide: DNA-directed RNA polymerase subunit omega (67 aa).

This sequence belongs to the RNA polymerase subunit omega family. The RNAP catalytic core consists of 2 alpha, 1 beta, 1 beta' and 1 omega subunit. When a sigma factor is associated with the core the holoenzyme is formed, which can initiate transcription.

It catalyses the reaction RNA(n) + a ribonucleoside 5'-triphosphate = RNA(n+1) + diphosphate. Its function is as follows. Promotes RNA polymerase assembly. Latches the N- and C-terminal regions of the beta' subunit thereby facilitating its interaction with the beta and alpha subunits. The protein is DNA-directed RNA polymerase subunit omega of Listeria welshimeri serovar 6b (strain ATCC 35897 / DSM 20650 / CCUG 15529 / CIP 8149 / NCTC 11857 / SLCC 5334 / V8).